The chain runs to 479 residues: UDP-glycosyltransferase 85A8 (479 aa).

UDP-alpha-D-glucose contacts are provided by residues Ser302, Trp358–Cys359, His376–Glu384, and Phe398–Gln401.

Belongs to the UDP-glycosyltransferase family.

Its function is as follows. May glycosylate diterpenes or flavonols in leaves. The sequence is that of UDP-glycosyltransferase 85A8 from Stevia rebaudiana (Stevia).